We begin with the raw amino-acid sequence, 76 residues long: Sec-independent protein translocase protein TatA (76 aa).

A helical membrane pass occupies residues 1–21 (MGGLSIWHWLIVLLIVALVFG). A disordered region spans residues 43 to 76 (MKEGEAPADAQQLPRSGSVDVNAKETTRSDSNKA). Residues 64–76 (NAKETTRSDSNKA) show a composition bias toward basic and acidic residues.

The protein belongs to the TatA/E family. In terms of assembly, the Tat system comprises two distinct complexes: a TatABC complex, containing multiple copies of TatA, TatB and TatC subunits, and a separate TatA complex, containing only TatA subunits. Substrates initially bind to the TatABC complex, which probably triggers association of the separate TatA complex to form the active translocon.

It localises to the cell inner membrane. In terms of biological role, part of the twin-arginine translocation (Tat) system that transports large folded proteins containing a characteristic twin-arginine motif in their signal peptide across membranes. TatA could form the protein-conducting channel of the Tat system. The protein is Sec-independent protein translocase protein TatA of Burkholderia lata (strain ATCC 17760 / DSM 23089 / LMG 22485 / NCIMB 9086 / R18194 / 383).